The chain runs to 62 residues: MRQEKPKRHGREDDEPPEPAPAGRARDTTVGDDTDELLDEIDGVLEENAVEFVRSYIQKGGE.

The interval 1 to 34 (MRQEKPKRHGREDDEPPEPAPAGRARDTTVGDDT) is disordered. The ARC ATPase binding stretch occupies residues 21–56 (PAGRARDTTVGDDTDELLDEIDGVLEENAVEFVRSY). Residue E62 forms an Isoglutamyl lysine isopeptide (Glu-Lys) (interchain with K-? in acceptor proteins) linkage.

Belongs to the prokaryotic ubiquitin-like protein family. Strongly interacts with the proteasome-associated ATPase ARC through a hydrophobic interface; the interacting region of Pup lies in its C-terminal half. There is one Pup binding site per ARC hexamer ring.

It participates in protein degradation; proteasomal Pup-dependent pathway. Functionally, protein modifier that is covalently attached to lysine residues of substrate proteins, thereby targeting them for proteasomal degradation. The tagging system is termed pupylation. This is Prokaryotic ubiquitin-like protein Pup 2 from Saccharopolyspora erythraea (strain ATCC 11635 / DSM 40517 / JCM 4748 / NBRC 13426 / NCIMB 8594 / NRRL 2338).